A 431-amino-acid chain; its full sequence is Lipid storage droplets surface-binding protein 1 (431 aa).

Residues 397–431 form a disordered region; it reads KVTGSDGGNSNHRSSRRRQDPNHYSATHNNINGVY. Residues 418-431 show a composition bias toward polar residues; sequence NHYSATHNNINGVY.

Belongs to the perilipin family.

It localises to the cytoplasm. It is found in the lipid droplet. Required for normal deposition of neutral lipids in the oocyte. This is Lipid storage droplets surface-binding protein 1 from Drosophila melanogaster (Fruit fly).